Consider the following 104-residue polypeptide: Nucleoid-associated protein GAU_1113 (104 aa).

Belongs to the YbaB/EbfC family. As to quaternary structure, homodimer.

The protein resides in the cytoplasm. The protein localises to the nucleoid. Its function is as follows. Binds to DNA and alters its conformation. May be involved in regulation of gene expression, nucleoid organization and DNA protection. This chain is Nucleoid-associated protein GAU_1113, found in Gemmatimonas aurantiaca (strain DSM 14586 / JCM 11422 / NBRC 100505 / T-27).